The chain runs to 307 residues: D-alanine--D-alanine ligase (307 aa).

Positions 110–299 constitute an ATP-grasp domain; the sequence is KQLWKGAGLP…FDVLVGEILL (190 aa). An ATP-binding site is contributed by 136-185; sequence PVIVKPAHEGSSIGMAKADNTEELGEALVAAEKFDQDVLVEAWVNGPEYT. Asp-253, Glu-266, and Asn-268 together coordinate Mg(2+).

Belongs to the D-alanine--D-alanine ligase family. Mg(2+) is required as a cofactor. Requires Mn(2+) as cofactor.

The protein localises to the cytoplasm. It catalyses the reaction 2 D-alanine + ATP = D-alanyl-D-alanine + ADP + phosphate + H(+). The protein operates within cell wall biogenesis; peptidoglycan biosynthesis. Its function is as follows. Cell wall formation. The polypeptide is D-alanine--D-alanine ligase (Alcanivorax borkumensis (strain ATCC 700651 / DSM 11573 / NCIMB 13689 / SK2)).